A 931-amino-acid polypeptide reads, in one-letter code: Isoleucine--tRNA ligase (931 aa).

The 'HIGH' region signature appears at 57 to 67; the sequence is PFANGNIHMGH. Glutamate 556 is an L-isoleucyl-5'-AMP binding site. Positions 597 to 601 match the 'KMSKS' region motif; that stretch reads KMSKS. Residue lysine 600 participates in ATP binding. Zn(2+) is bound by residues cysteine 890, cysteine 893, cysteine 910, and cysteine 913.

The protein belongs to the class-I aminoacyl-tRNA synthetase family. IleS type 1 subfamily. As to quaternary structure, monomer. It depends on Zn(2+) as a cofactor.

It localises to the cytoplasm. The catalysed reaction is tRNA(Ile) + L-isoleucine + ATP = L-isoleucyl-tRNA(Ile) + AMP + diphosphate. Its function is as follows. Catalyzes the attachment of isoleucine to tRNA(Ile). As IleRS can inadvertently accommodate and process structurally similar amino acids such as valine, to avoid such errors it has two additional distinct tRNA(Ile)-dependent editing activities. One activity is designated as 'pretransfer' editing and involves the hydrolysis of activated Val-AMP. The other activity is designated 'posttransfer' editing and involves deacylation of mischarged Val-tRNA(Ile). This chain is Isoleucine--tRNA ligase, found in Lactobacillus delbrueckii subsp. bulgaricus (strain ATCC 11842 / DSM 20081 / BCRC 10696 / JCM 1002 / NBRC 13953 / NCIMB 11778 / NCTC 12712 / WDCM 00102 / Lb 14).